The chain runs to 947 residues: Serine-aspartate repeat-containing protein C (947 aa).

A signal peptide spans 1-50; sequence MNNKKTATNRKGMIPNRLNKFSIRKYSVGTASILVGTTLIFGLSGHEAKA. The YSIRK-G/S signaling motif signature appears at 21–32; that stretch reads FSIRKYSVGTAS. A disordered region spans residues 51–164; sequence AEHTNGELNQ…STTPKTTTIK (114 aa). Positions 51-495 are ligand binding A region; it reads AEHTNGELNQ…GSSTANGDQK (445 aa). Over residues 56-71 the composition is skewed to polar residues; it reads GELNQSKNETTAPSEN. Positions 72–83 are enriched in basic and acidic residues; that stretch reads KTTKKVDSRQLK. Residues 84–155 are compositionally biased toward polar residues; that stretch reads DNTQTATADQ…SNLTQAKDVS (72 aa). 2 CNA-B domains span residues 496 to 606 and 607 to 717; these read KYNL…YKTP and KYSL…EEET. The tract at residues 678–927 is disordered; that stretch reads TQTGTNTTED…NNSNNGTLFG (250 aa). 2 stretches are compositionally biased toward acidic residues: residues 685–695 and 712–886; these read TEDDKDADGGE and YYEE…DSDS. Residues 910–914 carry the LPXTG sorting signal motif; sequence LPETG. Over residues 912–927 the composition is skewed to low complexity; it reads ETGSENNNSNNGTLFG. Threonine 913 is subject to Pentaglycyl murein peptidoglycan amidated threonine. The propeptide at 914 to 947 is removed by sortase; it reads GSENNNSNNGTLFGGLFAALGSLLLFGRRKKQNK.

The protein belongs to the serine-aspartate repeat-containing protein (SDr) family. As to quaternary structure, homodimerizes; via N2-Domain. Interacts with host NRXN1; this interaction mediates bacterial attachment to host cells.

Its subcellular location is the secreted. It is found in the cell wall. Functionally, cell surface-associated calcium-binding protein which plays an important role in adhesion and pathogenesis. Mediates interactions with components of the extracellular matrix such as host NRXN1 to promote bacterial adhesion. This chain is Serine-aspartate repeat-containing protein C (sdrC), found in Staphylococcus aureus (strain Newman).